Consider the following 1184-residue polypeptide: DNA-directed RNA polymerase subunit beta (1184 aa).

Residues 1160-1184 are disordered; that stretch reads DDDFTNQNDAFNIVQPENAATEKTE.

This sequence belongs to the RNA polymerase beta chain family. As to quaternary structure, the RNAP catalytic core consists of 2 alpha, 1 beta, 1 beta' and 1 omega subunit. When a sigma factor is associated with the core the holoenzyme is formed, which can initiate transcription.

The catalysed reaction is RNA(n) + a ribonucleoside 5'-triphosphate = RNA(n+1) + diphosphate. In terms of biological role, DNA-dependent RNA polymerase catalyzes the transcription of DNA into RNA using the four ribonucleoside triphosphates as substrates. This Listeria innocua serovar 6a (strain ATCC BAA-680 / CLIP 11262) protein is DNA-directed RNA polymerase subunit beta.